The primary structure comprises 58 residues: Large ribosomal subunit protein uL30 (58 aa).

It belongs to the universal ribosomal protein uL30 family. As to quaternary structure, part of the 50S ribosomal subunit.

This is Large ribosomal subunit protein uL30 from Pseudomonas putida (strain W619).